A 368-amino-acid polypeptide reads, in one-letter code: MTTLNSTPRADGFHMPAEWAPQTQVWMVWPERPDNWRLGGKPAQAAHVAIAKAIARFEPVTVAVSAAQYDNARARLDVPNIRVVEMSSNDAWVRDSGPTFVINERGEVRGVNWEFNAWGGFDGGLYAPWNLDSQLGSKVLEIERCPRYVTKGFVLEGGSIHVDGEGTLITTEECLLNRNRNPHLTREQIEAILGDYLAVDKVVWLPDGLFNDETDGHVDNFCCYIRPGEVLLAWTDDPEDPNYSRCHAALGILENTLDAKGRAFIVHKMPIPGPLFATEEECAGVDQVHGSQERNPSVRLAGSYVNFLIVNGGIIAPSFDDPMDEKARELLQTLFPEHEVVMAPGRELLLGGGNIHCLTQQQPAPHKA.

Cys-357 (amidino-cysteine intermediate) is an active-site residue.

This sequence belongs to the agmatine deiminase family. Homodimer.

The enzyme catalyses agmatine + H2O = N-carbamoylputrescine + NH4(+). It participates in amine and polyamine biosynthesis; putrescine biosynthesis via agmatine pathway; N-carbamoylputrescine from agmatine: step 1/1. Functionally, mediates the hydrolysis of agmatine into N-carbamoylputrescine in the arginine decarboxylase (ADC) pathway of putrescine biosynthesis, a basic polyamine. This is Agmatine deiminase from Pseudomonas savastanoi pv. phaseolicola (strain 1448A / Race 6) (Pseudomonas syringae pv. phaseolicola (strain 1448A / Race 6)).